A 330-amino-acid chain; its full sequence is Mas-related G-protein coupled receptor member B8 (330 aa).

The Extracellular portion of the chain corresponds to 1–33 (MDSSFPDWNIEFREQNESYFMESSSCDMSLAMS). N-linked (GlcNAc...) asparagine glycosylation is present at asparagine 16. A helical membrane pass occupies residues 34–54 (LLSIIIAIIGLTGNVIVLQLL). At 55-62 (GFHMHRNA) the chain is on the cytoplasmic side. Residues 63 to 83 (FSVYIFNLSGANFLFLCTHIV) traverse the membrane as a helical segment. Topologically, residues 84-101 (FSLENLIRQFHYIDIHMA) are extracellular. The helical transmembrane segment at 102-122 (LFSVNVTILAYLAGVSMITAI) threads the bilayer. At 123–146 (SVEYWLSVLWPTWYHAQRPKHTST) the chain is on the cytoplasmic side. The chain crosses the membrane as a helical span at residues 147–167 (VICTLLWVFSLLLTLWNWIIC). Residues 168–177 (KVLDYIYNWD) lie on the Extracellular side of the membrane. Residues 178 to 198 (MCWKLALIIVVWLLVLFVVLS) traverse the membrane as a helical segment. Over 199–219 (RSNQALLFRVFCGSQQTPVTR) the chain is Cytoplasmic. A helical transmembrane segment spans residues 220-240 (LLVTIMLTALVVLICGFGIGI). Over 241-260 (CFFYWKKEENSIMPCGYFYE) the chain is Extracellular. The helical transmembrane segment at 261–281 (TILLLSGVNSCANPIICLFVG) threads the bilayer. The Cytoplasmic segment spans residues 282–330 (SIKHCQFQCGTLRLILQRAIQESPEEEDEEVEEVVEQEGGEEDEESTTL). The tract at residues 302 to 330 (QESPEEEDEEVEEVVEQEGGEEDEESTTL) is disordered. The segment covering 304 to 330 (SPEEEDEEVEEVVEQEGGEEDEESTTL) has biased composition (acidic residues).

The protein belongs to the G-protein coupled receptor 1 family. Mas subfamily.

It localises to the membrane. Orphan receptor. Probably involved in the function of nociceptive neurons. May regulate nociceptor function and/or development, including the sensation or modulation of pain. This chain is Mas-related G-protein coupled receptor member B8 (Mrgprb8), found in Mus musculus (Mouse).